Reading from the N-terminus, the 478-residue chain is Zinc metalloproteinase/disintegrin (478 aa).

The N-terminal stretch at 1–20 is a signal peptide; sequence MIQVLLVTICLAAFPYQGSS. A propeptide spanning residues 21–187 is cleaved from the precursor; it reads IILESGNVND…PIKKASDLNL (167 aa). Residues 193–389 form the Peptidase M12B domain; that stretch reads RYVELFIVVD…QKPQCILKKP (197 aa). Intrachain disulfides connect C304–C384, C344–C368, and C346–C351. Residue H329 participates in Zn(2+) binding. E330 is a catalytic residue. Zn(2+)-binding residues include H333 and H339. The propeptide occupies 390 to 407; sequence LRTDTVSTPVSGNELLEA. The Disintegrin domain maps to 397–478; it reads TPVSGNELLE…ADCPRNGLYG (82 aa). 6 disulfide bridges follow: C411-C426, C413-C421, C420-C443, C434-C440, C439-C464, and C452-C471. The short motif at 456-458 is the Cell attachment site; atypical (MVD) element; the sequence is MVD.

It belongs to the venom metalloproteinase (M12B) family. P-II subfamily. P-IIa sub-subfamily. As to quaternary structure, monomer (disintegrin). Zn(2+) is required as a cofactor. Expressed by the venom gland.

Its subcellular location is the secreted. The enzyme catalyses Cleavage of 3-Asn-|-Gln-4, 9-Ser-|-His-10 and 14-Ala-|-Leu-15 bonds in insulin B chain and 14-Tyr-|-Gln-15 and 8-Thr-|-Ser-9 in A chain. Cleaves type IV collagen at 73-Ala-|-Gln-74 in alpha1-(IV) and at 7-Gly-|-Leu-8 in alpha2-(IV).. Functionally, snake venom zinc metalloproteinase that causes hemorrhage by provoking the degradation of the sub-endothelial matrix proteins (fibronectin, laminin, type IV collagen, nidogen, and gelatins). In terms of biological role, potent inhibitor of both collagen- (IC(50)=4 nM) and ADP-induced (IC(50)=8 nM) platelet aggregation. May act by binding to the platelet receptor GPIIb/GPIIIa (ITGA2B/ITGB3). The chain is Zinc metalloproteinase/disintegrin from Crotalus atrox (Western diamondback rattlesnake).